We begin with the raw amino-acid sequence, 333 residues long: Glycerol-3-phosphate dehydrogenase [NAD(P)+] (333 aa).

NADPH is bound by residues tryptophan 13, lysine 33, and lysine 108. Sn-glycerol 3-phosphate-binding residues include lysine 108 and glycine 138. An NADPH-binding site is contributed by serine 142. Sn-glycerol 3-phosphate contacts are provided by lysine 193, aspartate 246, serine 256, arginine 257, and asparagine 258. Lysine 193 serves as the catalytic Proton acceptor. Arginine 257 is an NADPH binding site. NADPH contacts are provided by valine 281 and glutamate 283.

Belongs to the NAD-dependent glycerol-3-phosphate dehydrogenase family.

It localises to the cytoplasm. It carries out the reaction sn-glycerol 3-phosphate + NAD(+) = dihydroxyacetone phosphate + NADH + H(+). It catalyses the reaction sn-glycerol 3-phosphate + NADP(+) = dihydroxyacetone phosphate + NADPH + H(+). It participates in membrane lipid metabolism; glycerophospholipid metabolism. Catalyzes the reduction of the glycolytic intermediate dihydroxyacetone phosphate (DHAP) to sn-glycerol 3-phosphate (G3P), the key precursor for phospholipid synthesis. This chain is Glycerol-3-phosphate dehydrogenase [NAD(P)+], found in Bifidobacterium longum (strain DJO10A).